Here is a 327-residue protein sequence, read N- to C-terminus: Tryptophan--tRNA ligase (327 aa).

ATP contacts are provided by residues 9–11 (RPT) and 17–18 (GN). A 'HIGH' region motif is present at residues 10 to 18 (PTGNLHLGN). Residue Asp-133 participates in L-tryptophan binding. ATP-binding positions include 145–147 (GKD), Val-186, and 194–198 (KMGKS). Positions 194-198 (KMGKS) match the 'KMSKS' region motif.

Belongs to the class-I aminoacyl-tRNA synthetase family. Homodimer.

It is found in the cytoplasm. It carries out the reaction tRNA(Trp) + L-tryptophan + ATP = L-tryptophyl-tRNA(Trp) + AMP + diphosphate + H(+). Its function is as follows. Catalyzes the attachment of tryptophan to tRNA(Trp). In Porphyromonas gingivalis (strain ATCC BAA-308 / W83), this protein is Tryptophan--tRNA ligase.